We begin with the raw amino-acid sequence, 85 residues long: MAHKKGVGSSRNGRDSNPKYLGVKLFGGQAIEAGNIIIRQRGTQFHAGDGVGLGRDHTLFALVNGTVEFSIKGPKKRRTVNVIPA.

It belongs to the bacterial ribosomal protein bL27 family.

The sequence is that of Large ribosomal subunit protein bL27 from Xylella fastidiosa (strain Temecula1 / ATCC 700964).